The following is a 76-amino-acid chain: ATP synthase subunit 9, mitochondrial (76 aa).

2 consecutive transmembrane segments (helical) span residues Ile14–Ile34 and Phe48–Val68.

The protein belongs to the ATPase C chain family. As to quaternary structure, F-type ATPases have 2 components, CF(1) - the catalytic core - and CF(0) - the membrane proton channel. CF(1) has five subunits: alpha(3), beta(3), gamma(1), delta(1), epsilon(1). CF(0) has three main subunits: a, b and c.

The protein resides in the mitochondrion membrane. In terms of biological role, mitochondrial membrane ATP synthase (F(1)F(0) ATP synthase or Complex V) produces ATP from ADP in the presence of a proton gradient across the membrane which is generated by electron transport complexes of the respiratory chain. F-type ATPases consist of two structural domains, F(1) - containing the extramembraneous catalytic core and F(0) - containing the membrane proton channel, linked together by a central stalk and a peripheral stalk. During catalysis, ATP synthesis in the catalytic domain of F(1) is coupled via a rotary mechanism of the central stalk subunits to proton translocation. Part of the complex F(0) domain. A homomeric c-ring of probably 10 subunits is part of the complex rotary element. In Cyberlindnera mrakii (Yeast), this protein is ATP synthase subunit 9, mitochondrial (ATP9).